We begin with the raw amino-acid sequence, 158 residues long: UPF0262 protein RHOS4_22360 (158 aa).

The protein belongs to the UPF0262 family.

The chain is UPF0262 protein RHOS4_22360 from Cereibacter sphaeroides (strain ATCC 17023 / DSM 158 / JCM 6121 / CCUG 31486 / LMG 2827 / NBRC 12203 / NCIMB 8253 / ATH 2.4.1.) (Rhodobacter sphaeroides).